Consider the following 101-residue polypeptide: Protein S100-A7-like 2 (101 aa).

EF-hand domains follow at residues 13-48 (IVAM…SGCE) and 50-85 (SDMD…ITID). Residues Asp63, Asn65, Asp67, Lys69, and Glu74 each contribute to the Ca(2+) site. His87 and His91 together coordinate Zn(2+).

This sequence belongs to the S-100 family.

This Homo sapiens (Human) protein is Protein S100-A7-like 2 (S100A7L2).